The chain runs to 469 residues: Mitochondrial adenyl nucleotide antiporter SLC25A25 (469 aa).

Residues 1 to 165 (MLCLCLYVPI…LYWKHSTIFD (165 aa)) form a regulatory N-terminal domain region. At 1–189 (MLCLCLYVPI…ERQTGMWWRH (189 aa)) the chain is on the mitochondrial intermembrane side. EF-hand domains are found at residues 47-80 (TYRQWKQKIVQAGDKDLDGQLDFEEFVHYLQDHE), 78-113 (DHEKKLRLVFKSLDKKNDGRIDAQEIMQSLRDLGVK), and 114-149 (ISEQQAEKILKSMDKNGTMTIDWNEWRDYHLLHPVE). Ca(2+) contacts are provided by D60, D62, D64, Q66, and E71. Residues 151–160 (IPEIILYWKH) form a linker region region. Residues 166–469 (VGENLTVPDE…LKITLGVQSR (304 aa)) form a C-terminal transmembrane transporter domain region. 3 Solcar repeats span residues 184 to 270 (GMWW…MKRL), 278 to 363 (LRIH…LKNT), and 375 to 463 (PGVF…LKIT). A helical transmembrane segment spans residues 190–207 (LVAGGGAGAVSRTCTAPL). The Mitochondrial matrix segment spans residues 208–244 (DRLKVLMQVHASRSNNMCIIGGFTQMIREGGAKSLWR). A helical transmembrane segment spans residues 245-264 (GNGINVLKIAPESAIKFMAY). Topologically, residues 265 to 287 (EQMKRLVGSDQETLRIHERLVAG) are mitochondrial intermembrane. The chain crosses the membrane as a helical span at residues 288 to 301 (SLAGAIAQSSIYPM). The Mitochondrial matrix segment spans residues 302 to 337 (EVLKTRMALRKTGQYSGMLDCAKRILAKEGVAAFYK). Residues 338-357 (GYIPNMLGIIPYAGIDLAVY) form a helical membrane-spanning segment. The Mitochondrial intermembrane segment spans residues 358–380 (ETLKNTWLQRYAVNSADPGVFVL). Residues 381-398 (LACGTISSTCGQLASYPL) form a helical membrane-spanning segment. Over 399 to 437 (ALVRTRMQAQASIEGAPEVTMSSLFKQILRTEGAFGLYR) the chain is Mitochondrial matrix. A helical membrane pass occupies residues 438–457 (GLAPNFMKVIPAVSISYVVY). Residues 458 to 469 (ENLKITLGVQSR) lie on the Mitochondrial intermembrane side of the membrane.

Belongs to the mitochondrial carrier (TC 2.A.29) family. As to expression, mainly present in the liver and the skeletal muscle (at protein level).

It localises to the mitochondrion inner membrane. It catalyses the reaction Mg(2+)(out) + phosphate(in) + ATP(out) = Mg(2+)(in) + phosphate(out) + ATP(in). Its activity is regulated as follows. Activated by an increase in cytosolic calcium levels that induce a conformational change of the N-terminal regulatory domain, uncapping the channel and allowing transport. Functionally, electroneutral antiporter that most probably mediates the transport of adenyl nucleotides through the inner mitochondrial membrane. Originally identified as an ATP-magnesium/inorganic phosphate antiporter, it could have a broader specificity for adenyl nucleotides. By regulating the mitochondrial matrix adenyl nucleotide pool could adapt to changing cellular energetic demands and indirectly regulate adenyl nucleotide-dependent metabolic pathways. This is Mitochondrial adenyl nucleotide antiporter SLC25A25 from Rattus norvegicus (Rat).